The chain runs to 315 residues: Glycine--tRNA ligase alpha subunit (315 aa).

Belongs to the class-II aminoacyl-tRNA synthetase family. In terms of assembly, tetramer of two alpha and two beta subunits.

Its subcellular location is the cytoplasm. It carries out the reaction tRNA(Gly) + glycine + ATP = glycyl-tRNA(Gly) + AMP + diphosphate. The sequence is that of Glycine--tRNA ligase alpha subunit from Pseudomonas putida (strain W619).